A 141-amino-acid polypeptide reads, in one-letter code: MGIKYLLRDKMVVRSWRHIKERYCLIGVRCKNCGTVYFPSREICPKCRRKTEFEEIKLSGKGKVYTYSVVHVAPKDFEKQAPYVIAIIELEEGARITGQIVDCKPEDVYIGMQVEAVFRRIKEDGDDGVITYGYKFKPIEN.

C30, C33, C44, and C47 together coordinate Zn(2+).

Belongs to the scaffold protein DUF35 family. Interacts with acetoacetyl-CoA thiolase and HMG-CoA synthase (HMGCS) that catalyzes the first and second step in the mevalonate pathway, respectively.

Its function is as follows. Functions as a scaffold to connect the acetoacetyl-CoA thiolase and HMG-CoA synthase (HMGCS) dimers in the channeling thiolase/HMGCS complex, which allows for efficient coupling of the endergonic thiolase reaction with the exergonic HMGCS reaction. This chain is DUF35 domain-containing scaffold protein, found in Methanocaldococcus jannaschii (strain ATCC 43067 / DSM 2661 / JAL-1 / JCM 10045 / NBRC 100440) (Methanococcus jannaschii).